We begin with the raw amino-acid sequence, 288 residues long: Polyamine aminopropyltransferase (288 aa).

The PABS domain maps to 9-238 (ETLHDQFGQY…GIMTFAWATD (230 aa)). Position 33 (Gln-33) interacts with S-methyl-5'-thioadenosine. Positions 64 and 88 each coordinate spermidine. S-methyl-5'-thioadenosine-binding positions include Glu-108 and 140–141 (DG). Asp-158 serves as the catalytic Proton acceptor. A spermidine-binding site is contributed by 158–161 (DCTD). Pro-165 contributes to the S-methyl-5'-thioadenosine binding site.

This sequence belongs to the spermidine/spermine synthase family. Homodimer or homotetramer.

The protein resides in the cytoplasm. The enzyme catalyses S-adenosyl 3-(methylsulfanyl)propylamine + putrescine = S-methyl-5'-thioadenosine + spermidine + H(+). Its pathway is amine and polyamine biosynthesis; spermidine biosynthesis; spermidine from putrescine: step 1/1. Its function is as follows. Catalyzes the irreversible transfer of a propylamine group from the amino donor S-adenosylmethioninamine (decarboxy-AdoMet) to putrescine (1,4-diaminobutane) to yield spermidine. This Shigella sonnei (strain Ss046) protein is Polyamine aminopropyltransferase.